The chain runs to 355 residues: MSNFAKIFQSNWIDLNKLGKLEIFLKTILGIYKAPNRTHLLAHAADISSFYAVKNIYEYMKNDDEGKEILKNKPLLIRQDIQFNELKKLPKNTLGYKYMEFLETYKLHAHDREVAHFFDNINYSYILTRYRQIHDIGHVVYNLNISIESEAALKMIELIHTKLPITLLAILVAPFMSPLYRFQYIFKDKIPPNFLNPNFDYTYXDDYNYIDELSLKQYVYNLTEYFHIDKINNNLFFQKLYKYYFDNLNNSNHIRGTIIYGYNNENNNDIIFDDINNEYIFLKNPEKNYFLFKYKPRQTLLNQLYPWAYMAGMAAKKPLHSIHIENWLDKDIDIFRKTYNIIPLPDHLNLMSGIN.

The Zn(2+) site is built by H134, D135, H138, and E150.

This sequence belongs to the COQ4 family. In terms of assembly, component of a multi-subunit COQ enzyme complex. Requires Zn(2+) as cofactor.

The protein localises to the mitochondrion inner membrane. It carries out the reaction a 4-hydroxy-3-methoxy-5-(all-trans-polyprenyl)benzoate + H(+) = a 2-methoxy-6-(all-trans-polyprenyl)phenol + CO2. The protein operates within cofactor biosynthesis; ubiquinone biosynthesis. Functionally, lyase that catalyzes the C1-decarboxylation of 4-hydroxy-3-methoxy-5-(all-trans-polyprenyl)benzoic acid into 2-methoxy-6-(all-trans-polyprenyl)phenol during ubiquinone biosynthesis. The chain is Ubiquinone biosynthesis protein COQ4 homolog, mitochondrial from Plasmodium yoelii yoelii.